The following is an 86-amino-acid chain: Large ribosomal subunit protein bL31B (86 aa).

The protein belongs to the bacterial ribosomal protein bL31 family. Type B subfamily. Part of the 50S ribosomal subunit.

This chain is Large ribosomal subunit protein bL31B, found in Citrobacter koseri (strain ATCC BAA-895 / CDC 4225-83 / SGSC4696).